Consider the following 694-residue polypeptide: Glycine--tRNA ligase beta subunit (694 aa).

Belongs to the class-II aminoacyl-tRNA synthetase family. As to quaternary structure, tetramer of two alpha and two beta subunits.

Its subcellular location is the cytoplasm. The catalysed reaction is tRNA(Gly) + glycine + ATP = glycyl-tRNA(Gly) + AMP + diphosphate. This Moorella thermoacetica (strain ATCC 39073 / JCM 9320) protein is Glycine--tRNA ligase beta subunit.